The chain runs to 415 residues: Gamma-glutamyl phosphate reductase (415 aa).

This sequence belongs to the gamma-glutamyl phosphate reductase family.

The protein resides in the cytoplasm. The enzyme catalyses L-glutamate 5-semialdehyde + phosphate + NADP(+) = L-glutamyl 5-phosphate + NADPH + H(+). It functions in the pathway amino-acid biosynthesis; L-proline biosynthesis; L-glutamate 5-semialdehyde from L-glutamate: step 2/2. In terms of biological role, catalyzes the NADPH-dependent reduction of L-glutamate 5-phosphate into L-glutamate 5-semialdehyde and phosphate. The product spontaneously undergoes cyclization to form 1-pyrroline-5-carboxylate. The sequence is that of Gamma-glutamyl phosphate reductase from Dictyoglomus thermophilum (strain ATCC 35947 / DSM 3960 / H-6-12).